The chain runs to 654 residues: Myrosinase-binding protein 2 (654 aa).

Jacalin-type lectin domains follow at residues 2–151 (SEKV…HFFA), 156–291 (LKHF…HFAP), 346–489 (PNKV…YFAP), and 502–645 (AKKL…HAVP). Residues 314 to 346 (VPAPSPAPAPSPAPAPAPAPAPAPTPAPAPAPP) show a composition bias toward pro residues. Residues 314–355 (VPAPSPAPAPSPAPAPAPAPAPAPTPAPAPAPPNKVEALGGN) form a disordered region.

Belongs to the jacalin lectin family. In terms of tissue distribution, expressed in flowers. Detected mainly in ovules and styles of immature flowers, but also in pistils, styles, stamens, petals and embryos. Not detected in leaves.

This chain is Myrosinase-binding protein 2 (MBP2), found in Arabidopsis thaliana (Mouse-ear cress).